Reading from the N-terminus, the 108-residue chain is MTRKIFTNTRERWRQQSVNNAFAKLRKLIPTHPPDKKLSKNETLRLAMRYINFLVKVLGEQSLHQTGVAAQGNILGLFPPKTRLPDEDDRTLLNDYRVPSPGPSHGAP.

The region spanning 2-54 is the bHLH domain; it reads TRKIFTNTRERWRQQSVNNAFAKLRKLIPTHPPDKKLSKNETLRLAMRYINFL. Positions 76-108 are disordered; the sequence is GLFPPKTRLPDEDDRTLLNDYRVPSPGPSHGAP.

This is T-cell acute lymphocytic leukemia protein 2 homolog (Tal2) from Mus musculus (Mouse).